Reading from the N-terminus, the 280-residue chain is Bifunctional protein FolD (280 aa).

Residues 158 to 160 (GES), Ile-183, and Ile-222 contribute to the NADP(+) site.

This sequence belongs to the tetrahydrofolate dehydrogenase/cyclohydrolase family. Homodimer.

It catalyses the reaction (6R)-5,10-methylene-5,6,7,8-tetrahydrofolate + NADP(+) = (6R)-5,10-methenyltetrahydrofolate + NADPH. The enzyme catalyses (6R)-5,10-methenyltetrahydrofolate + H2O = (6R)-10-formyltetrahydrofolate + H(+). Its pathway is one-carbon metabolism; tetrahydrofolate interconversion. Its function is as follows. Catalyzes the oxidation of 5,10-methylenetetrahydrofolate to 5,10-methenyltetrahydrofolate and then the hydrolysis of 5,10-methenyltetrahydrofolate to 10-formyltetrahydrofolate. The polypeptide is Bifunctional protein FolD (Mycoplasma mobile (strain ATCC 43663 / 163K / NCTC 11711) (Mesomycoplasma mobile)).